A 221-amino-acid chain; its full sequence is Large ribosomal subunit protein uL3 (221 aa).

It belongs to the universal ribosomal protein uL3 family. Part of the 50S ribosomal subunit. Forms a cluster with proteins L14 and L19.

Functionally, one of the primary rRNA binding proteins, it binds directly near the 3'-end of the 23S rRNA, where it nucleates assembly of the 50S subunit. The protein is Large ribosomal subunit protein uL3 of Chlamydia felis (strain Fe/C-56) (Chlamydophila felis).